Consider the following 82-residue polypeptide: RNA-binding protein Hfq (82 aa).

Residues 11–71 (DTFLNHVRKT…ISTIMPGAPI (61 aa)) form the Sm domain.

This sequence belongs to the Hfq family. Homohexamer.

RNA chaperone that binds small regulatory RNA (sRNAs) and mRNAs to facilitate mRNA translational regulation in response to envelope stress, environmental stress and changes in metabolite concentrations. Also binds with high specificity to tRNAs. The sequence is that of RNA-binding protein Hfq from Nitrobacter winogradskyi (strain ATCC 25391 / DSM 10237 / CIP 104748 / NCIMB 11846 / Nb-255).